The following is a 24-amino-acid chain: Carboxypeptidase 1 (24 aa).

N-linked (GlcNAc...) asparagine glycosylation is found at asparagine 3 and asparagine 11.

It belongs to the peptidase S10 family. In terms of assembly, monomer. Post-translationally, contains both N- and O-linked sugar chains. The N-linked oligosaccharides are unique structures of Man(10)GlcNAc(2) and Man(11)GlcNAc(2). Deglycosylation does neither affect catalytic activity, pH, thermal stability, or resistance to proteolysis of the enzyme.

Its subcellular location is the secreted. With respect to regulation, inhibited by DFP. Its function is as follows. Removes acidic, neutral and basic amino acids as well as proline from the C-terminal position. Digests preferentially peptides containing a hydrophobic residue in P1' position, as well as arginine, lysine or phenylalanine in P1 position of ester substrate. Catalyzes also peptide synthesis. In Aspergillus niger, this protein is Carboxypeptidase 1.